The following is a 645-amino-acid chain: Leucine-rich repeat protein soc-2 homolog (645 aa).

The segment covering 1–19 (MNLCSSGATASTTSLSSTG) has biased composition (low complexity). Disordered stretches follow at residues 1 to 67 (MNLC…AGGS) and 83 to 151 (NSPA…IQAD). Composition is skewed to gly residues over residues 26-49 (GVPG…GGGS) and 88-97 (GAGGASGSTG). The span at 98–107 (SGQQPTGSNG) shows a compositional bias: low complexity. 20 LRR repeats span residues 165–186 (GIKR…VKEC), 188–209 (HLTE…IGCL), 211–232 (SLRN…LQNC), 234–255 (QLKV…IYRL), 257–278 (SLTT…LRQL), 280–301 (NLTM…IGAL), 303–324 (NLTT…IGNC), 326–347 (NLSA…IGNL), 349–371 (SLVR…KNCK), 372–393 (SMDE…MLAS), 396–417 (GLTT…GPAQ), 420–441 (NVYS…IFSR), 444–465 (GLTK…IGTW), 467–488 (NMVE…IMNL), 490–511 (NLEI…IGNL), 513–534 (RLRI…IGLL), 536–557 (ELQR…IGHL), 559–580 (NLTH…IGSL), 582–604 (SLEN…LALC), and 606–627 (NLKY…IQAG).

This sequence belongs to the SHOC2 family.

In terms of biological role, acts as a Ras effector and participates in MAPK pathway activation. Probably acts as a regulatory subunit of protein phosphatase that specifically dephosphorylates Raf kinase and stimulate Raf activity at specialized signaling complexes upon Ras activation. The sequence is that of Leucine-rich repeat protein soc-2 homolog (Sur-8) from Drosophila yakuba (Fruit fly).